Reading from the N-terminus, the 622-residue chain is 1,4-alpha-glucan branching enzyme GlgB (622 aa).

The Nucleophile role is filled by Asp-300. Catalysis depends on Glu-351, which acts as the Proton donor.

This sequence belongs to the glycosyl hydrolase 13 family. GlgB subfamily. Monomer.

It catalyses the reaction Transfers a segment of a (1-&gt;4)-alpha-D-glucan chain to a primary hydroxy group in a similar glucan chain.. Its pathway is glycan biosynthesis; glycogen biosynthesis. In terms of biological role, catalyzes the formation of the alpha-1,6-glucosidic linkages in glycogen by scission of a 1,4-alpha-linked oligosaccharide from growing alpha-1,4-glucan chains and the subsequent attachment of the oligosaccharide to the alpha-1,6 position. The polypeptide is 1,4-alpha-glucan branching enzyme GlgB (Streptococcus agalactiae serotype III (strain NEM316)).